The chain runs to 1308 residues: Misshapen-like kinase 1 (1308 aa).

The region spanning 25–289 (FELVEVVGNG…TEQLLKFPFI (265 aa)) is the Protein kinase domain. ATP is bound by residues 31 to 39 (VGNGTYGQV) and lysine 54. Catalysis depends on aspartate 153, which acts as the Proton acceptor. 3 disordered regions span residues 299–347 (RIQL…NVPG), 363–383 (KSNS…QRDP), and 395–862 (QRRI…GGTM). Over residues 317-333 (EETEYEYSGSEEEDDSH) the composition is skewed to acidic residues. 2 positions are modified to phosphoserine: serine 324 and serine 326. Low complexity predominate over residues 371 to 380 (QQQQLQQQQQ). A compositionally biased stretch (basic and acidic residues) spans 396–466 (RRIEEQKEER…EEQRQSERLQ (71 aa)). Residues 479 to 497 (LQQQQQQQQLQKQQQQQQQ) show a composition bias toward low complexity. Arginine 503 and arginine 511 each carry omega-N-methylarginine. Residues 520–530 (AWAREVEERAR) are compositionally biased toward basic and acidic residues. Residues 600–610 (RSQSLQDQPTR) show a composition bias toward polar residues. Low complexity predominate over residues 623 to 633 (PAAVPTPTATP). Serine 644 bears the Phosphoserine mark. Residues 673 to 685 (QRTSSIATALNTS) are compositionally biased toward polar residues. Aspartate 702, serine 720, serine 729, serine 745, serine 746, and serine 750 each carry phosphoserine. Basic and acidic residues predominate over residues 702–714 (DLRRSDPGWERSD). Residues 773–797 (AIGEDFVLLKERTLDEAPKPPKKAM) are compositionally biased toward basic and acidic residues. The segment covering 804 to 820 (EEVESSEEEEEEGDGEP) has biased composition (acidic residues). A mediates interaction with RAP2A region spans residues 842-1308 (MVVHDVEEIS…TLNRNCIMNW (467 aa)). Threonine 867 is subject to Phosphothreonine. Positions 881–918 (GYTNLPDVVQPSHSPTENSKGQSPPTKDGGSDYQSRGL) are disordered. A compositionally biased stretch (polar residues) spans 891-905 (PSHSPTENSKGQSPP). The 288-residue stretch at 995–1282 (NSEILCAALW…KFLCERNDKV (288 aa)) folds into the CNH domain.

This sequence belongs to the protein kinase superfamily. STE Ser/Thr protein kinase family. STE20 subfamily. In terms of assembly, interacts with RAP2A and TANC1. Interacts with NCK1. Requires Mg(2+) as cofactor. In terms of processing, autophosphorylated. Appears to be ubiquitous, expressed in all tissue types examined. Highly expressed in the brain, moderately expressed in kidney and spleen, low levels present in heart and skeletal muscle. Isoform 2 is more abundant in the brain than isoform 1.

The protein resides in the cytoplasm. The protein localises to the postsynaptic density. Its subcellular location is the cell projection. It is found in the axon. It localises to the dendrite. The enzyme catalyses L-seryl-[protein] + ATP = O-phospho-L-seryl-[protein] + ADP + H(+). It carries out the reaction L-threonyl-[protein] + ATP = O-phospho-L-threonyl-[protein] + ADP + H(+). Its function is as follows. Serine/threonine kinase which acts as a negative regulator of Ras-related Rap2-mediated signal transduction to control neuronal structure and AMPA receptor trafficking. Required for normal synaptic density, dendrite complexity, as well as surface AMPA receptor expression in hippocampal neurons. Can activate the JNK and MAPK14/p38 pathways and mediates stimulation of the stress-activated protein kinase MAPK14/p38 MAPK downstream of the Raf/ERK pathway. Phosphorylates TANC1 upon stimulation by RAP2A, MBP and SMAD1. Has an essential function in negative selection of thymocytes, perhaps by coupling NCK1 to activation of JNK1. Activator of the Hippo signaling pathway which plays a pivotal role in organ size control and tumor suppression by restricting proliferation and promoting apoptosis. MAP4Ks act in parallel to and are partially redundant with STK3/MST2 and STK4/MST2 in the phosphorylation and activation of LATS1/2, and establish MAP4Ks as components of the expanded Hippo pathway. In Mus musculus (Mouse), this protein is Misshapen-like kinase 1.